A 157-amino-acid chain; its full sequence is Peptide methionine sulfoxide reductase MsrA (157 aa).

Cys-10 is a catalytic residue.

It belongs to the MsrA Met sulfoxide reductase family.

The catalysed reaction is L-methionyl-[protein] + [thioredoxin]-disulfide + H2O = L-methionyl-(S)-S-oxide-[protein] + [thioredoxin]-dithiol. It carries out the reaction [thioredoxin]-disulfide + L-methionine + H2O = L-methionine (S)-S-oxide + [thioredoxin]-dithiol. Its function is as follows. Has an important function as a repair enzyme for proteins that have been inactivated by oxidation. Catalyzes the reversible oxidation-reduction of methionine sulfoxide in proteins to methionine. The polypeptide is Peptide methionine sulfoxide reductase MsrA (Clostridium perfringens (strain 13 / Type A)).